The following is a 307-amino-acid chain: Porphobilinogen deaminase (307 aa).

Residue Cys239 is modified to S-(dipyrrolylmethanemethyl)cysteine.

This sequence belongs to the HMBS family. In terms of assembly, monomer. Requires dipyrromethane as cofactor.

The enzyme catalyses 4 porphobilinogen + H2O = hydroxymethylbilane + 4 NH4(+). It functions in the pathway porphyrin-containing compound metabolism; protoporphyrin-IX biosynthesis; coproporphyrinogen-III from 5-aminolevulinate: step 2/4. Functionally, tetrapolymerization of the monopyrrole PBG into the hydroxymethylbilane pre-uroporphyrinogen in several discrete steps. The protein is Porphobilinogen deaminase (hemC) of Campylobacter jejuni subsp. jejuni serotype O:2 (strain ATCC 700819 / NCTC 11168).